A 263-amino-acid chain; its full sequence is Small ribosomal subunit protein uS2 (263 aa).

The interval 228-263 (QLEEPEADLADEDDNGMTTSDDGDAEALDIPDDSDA) is disordered. Over residues 230–263 (EEPEADLADEDDNGMTTSDDGDAEALDIPDDSDA) the composition is skewed to acidic residues.

The protein belongs to the universal ribosomal protein uS2 family.

This chain is Small ribosomal subunit protein uS2, found in Thermosynechococcus vestitus (strain NIES-2133 / IAM M-273 / BP-1).